The primary structure comprises 424 residues: Serine--tRNA ligase (424 aa).

Residue 231–233 (TAE) participates in L-serine binding. 262–264 (RSE) lines the ATP pocket. L-serine is bound at residue Glu-285. 349–352 (EISS) is an ATP binding site. Ser-385 is a binding site for L-serine.

The protein belongs to the class-II aminoacyl-tRNA synthetase family. Type-1 seryl-tRNA synthetase subfamily. Homodimer. The tRNA molecule binds across the dimer.

It is found in the cytoplasm. It catalyses the reaction tRNA(Ser) + L-serine + ATP = L-seryl-tRNA(Ser) + AMP + diphosphate + H(+). The catalysed reaction is tRNA(Sec) + L-serine + ATP = L-seryl-tRNA(Sec) + AMP + diphosphate + H(+). Its pathway is aminoacyl-tRNA biosynthesis; selenocysteinyl-tRNA(Sec) biosynthesis; L-seryl-tRNA(Sec) from L-serine and tRNA(Sec): step 1/1. Catalyzes the attachment of serine to tRNA(Ser). Is also able to aminoacylate tRNA(Sec) with serine, to form the misacylated tRNA L-seryl-tRNA(Sec), which will be further converted into selenocysteinyl-tRNA(Sec). The protein is Serine--tRNA ligase of Bacillus cereus (strain B4264).